The sequence spans 527 residues: Ankyrin repeat domain-containing protein 42 (527 aa).

Positions 1–27 are disordered; that stretch reads MPGVANPGPSKSRRETADSSSRKKVHF. Positions 12–21 are enriched in basic and acidic residues; the sequence is SRRETADSSS. ANK repeat units lie at residues 25 to 54, 59 to 88, 92 to 121, 125 to 154, 158 to 187, 191 to 220, 228 to 257, 263 to 293, 297 to 326, and 330 to 360; these read VHFS…NLNE, HQFT…DATQ, RGWT…NLAT, RGCT…DPSV, REWK…GIED, NGNL…SATQ, NGEN…EGSH, DLAF…NLNE, NGST…ESNI, and AGET…EIDD. A coiled-coil region spans residues 395–484; sequence NARMRAHKKI…ETLQKIQVTS (90 aa).

The chain is Ankyrin repeat domain-containing protein 42 (Ankrd42) from Mus musculus (Mouse).